Reading from the N-terminus, the 6629-residue chain is MASSLKQGVSPKPRDVILVSKDIPEQLCDALFFYTSHNPKDYADAFAVRQKFDRSLQTGKQFKFETVCGLFLLKGVDKITPGVPAKVLKATSKLADLEDIFGVSPLARKYRELLKTACQWSLTVEALDVRAQTLDEIFDPTEILWLQVAAKIHVSSMAMRRLVGEVTAKVMDALGSNLSALFQIVKQQIARIFQKALAIFENVNELPQRIAALKMAFAKCARSITVVVVERTLVVKEFAGTCLASINGAVAKFFEELPNGFMGSKIFTTLAFFKEAAVRVVENIPNAPRGTKGFEVVGNAKGTQVVVRGMRNDLTLLDQKADIPVEPEGWSAILDGHLCYVFRSGDRFYAAPLSGNFALSDVHCCERVVCLSDGVTPEINDGLILAAIYSSFSVSELVTALKKGEPFKFLGHKFVYAKDAAVSFTLAKAATIADVLRLFQSARVIAEDVWSSFTEKSFEFWKLAYGKVRNLEEFVKTYVCKAQMSIVILAAVLGEDIWHLVSQVIYKLGVLFTKVVDFCDKHWKGFCVQLKRAKLIVTETFCVLKGVAQHCFQLLLDAIHSLYKSFKKCALGRIHGDLLFWKGGVHKIVQDGDEIWFDAIDSVDVEDLGVVQEKSIDFEVCDDVTLPENQPGHMVQIEDDGKNYMFFRFKKDENIYYTPMSQLGAINVVCKAGGKTVTFGETTVQEIPPPDVVPIKVSIECCGEPWNTIFKKAYKEPIEVDTDLTVEQLLSVIYEKMCDDLKLFPEAPEPPPFENVALVDKNGKDLDCIKSCHLIYRDYESDDDIEEEDAEECDTDSGEAEECDTNSECEEEDEDTKVLALIQDPASIKYPLPLDEDYSVYNGCIVHKDALDVVNLPSGEETFVVNNCFEGAVKPLPQKVVDVLGDWGEAVDAQEQLCQQEPLQHTFEEPVENSTGSSKTMTEQVVVEDQELPVVEQDQDVVVYTPTDLEVAKETAEEVDEFILIFAVPKEEVVSQKDGAQIKQEPIQVVKPQREKKAKKFKVKPATCEKPKFLEYKTCVGDLTVVIAKALDEFKEFCIVNAANEHMTHGSGVAKAIADFCGLDFVEYCEDYVKKHGPQQRLVTPSFVKGIQCVNNVVGPRHGDNNLHEKLVAAYKNVLVDGVVNYVVPVLSLGIFGVDFKMSIDAMREAFEGCTIRVLLFSLSQEHIDYFDVTCKQKTIYLTEDGVKYRSIVLKPGDSLGQFGQVYAKNKIVFTADDVEDKEILYVPTTDKSILEYYGLDAQKYVIYLQTLAQKWNVQYRDNFLILEWRDGNCWISSAIVLLQAAKIRFKGFLTEAWAKLLGGDPTDFVAWCYASCTAKVGDFSDANWLLANLAEHFDADYTNAFLKKRVSCNCGIKSYELRGLEACIQPVRATNLLHFKTQYSNCPTCGANNTDEVIEASLPYLLLFATDGPATVDCDEDAVGTVVFVGSTNSGHCYTQAAGQAFDNLAKDRKFGKKSPYITAMYTRFAFKNETSLPVAKQSKGKSKSVKEDVSNLATSSKASFDNLTDFEQWYDSNIYESLKVQESPDNFDKYVSFTTKEDSKLPLTLKVRGIKSVVDFRSKDGFIYKLTPDTDENSKAPVYYPVLDAISLKAIWVEGNANFVVGHPNYYSKSLHIPTFWENAENFVKMGDKIGGVTMGLWRAEHLNKPNLERIFNIAKKAIVGSSVVTTQCGKLIGKAATFIADKVGGGVVRNITDSIKGLCGITRGHFERKMSPQFLKTLMFFLFYFLKASVKSVVASYKTVLCKVVLATLLIVWFVYTSNPVMFTGIRVLDFLFEGSLCGPYKDYGKDSFDVLRYCADDFICRVCLHDKDSLHLYKHAYSVEQVYKDAASGFIFNWNWLYLVFLILFVKPVAGFVIICYCVKYLVLNSTVLQTGVCFLDWFVQTVFSHFNFMGAGFYFWLFYKIYIQVHHILYCKDVTCEVCKRVARSNRQEVSVVVGGRKQIVHVYTNSGYNFCKRHNWYCRNCDDYGHQNTFMSPEVAGELSEKLKRHVKPTAYAYHVVDEACLVDDFVNLKYKAATPGKDSASSAVKCFSVTDFLKKAVFLKEALKCEQISNDGFIVCNTQSAHALEEAKNAAIYYAQYLCKPILILDQALYEQLVVEPVSKSVIDKVCSILSSIISVDTAALNYKAGTLRDALLSITKDEEAVDMAIFCHNHDVDYTGDGFTNVIPSYGIDTGKLTPRDRGFLINADASIANLRVKNAPPVVWKFSELIKLSDSCLKYLISATVKSGVRFFITKSGAKQVIACHTQKLLVEKKAGGIVSGTFKCFKSYFKWLLIFYILFTACCSGYYYMEVSKSFVHPMYDVNSTLHVEGFKVIDKGVLREIVPEDTCFSNKFVNFDAFWGRPYDNSRNCPIVTAVIDGDGTVATGVPGFVSWVMDGVMFIHMTQTERKPWYIPTWFNREIVGYTQDSIITEGSFYTSIALFSARCLYLTASNTPQLYCFNGDNDAPGALPFGSIIPHRVYFQPNGVRLIVPQQILHTPYVVKFVSDSYCRGSVCEYTRPGYCVSLNPQWVLFNDEYTSKPGVFCGSTVRELMFSMVSTFFTGVNPNIYMQLATMFLILVVVVLIFAMVIKFQGVFKAYATTVFITMLVWVINAFILCVHSYNSVLAVILLVLYCYASLVTSRNTVIIMHCWLVFTFGLIVPTWLACCYLGFIIYMYTPLFLWCYGTTKNTRKLYDGNEFVGNYDLAAKSTFVIRGSEFVKLTNEIGDKFEAYLSAYARLKYYSGTGSEQDYLQACRAWLAYALDQYRNSGVEIVYTPPRYSIGVSRLQSGFKKLVSPSSAVEKCIVSVSYRGNNLNGLWLGDTIYCPRHVLGKFSGDQWNDVLNLANNHEFEVTTQHGVTLNVVSRRLKGAVLILQTAVANAETPKYKFIKANCGDSFTIACAYGGTVVGLYPVTMRSNGTIRASFLAGACGSVGFNIEKGVVNFFYMHHLELPNALHTGTDLMGEFYGGYVDEEVAQRVPPDNLVTNNIVAWLYAAIISVKESSFSLPKWLESTTVSVDDYNKWAGDNGFTPFSTSTAITKLSAITGVDVCKLLRTIMVKNSQWGGDPILGQYNFEDELTPESVFNQIGGVRLQSSFVRKATSWFWSRCVLACFLFVLCAIVLFTAVPLKFYVYAAVILLMAVLFISFTVKHVMAYMDTFLLPTLITVIIGVCAEVPFIYNTLISQVVIFLSQWYDPVVFDTMVPWMFLPLVLYTAFKCVQGCYMNSFNTSLLMLYQFVKLGFVIYTSSNTLTAYTEGNWELFFELVHTTVLANVSSNSLIGLFVFKCAKWMLYYCNATYLNNYVLMAVMVNCIGWLCTCYFGLYWWVNKVFGLTLGKYNFKVSVDQYRYMCLHKINPPKTVWEVFSTNILIQGIGGDRVLPIATVQAKLSDVKCTTVVLMQLLTKLNVEANSKMHVYLVELHNKILASDDVGECMDNLLGMLITLFCIDSTIDLSEYCDDILKRSTVLQSVTQEFSHIPSYAEYERAKNLYEKVLVDSKNGGVTQQELAAYRKAANIAKSVFDRDLAVQKKLDSMAERAMTTMYKEARVTDRRAKLVSSLHALLFSMLKKIDSEKLNVLFDQASSGVVPLATVPIVCSNKLTLVIPDPETWVKCVEGVHVTYSTVVWNIDTVIDADGTELHPTSTGSGLTYCISGANIAWPLKVNLTRNGHNKVDVVLQNNELMPHGVKTKACVAGVDQAHCSVESKCYYTNISGNSVVAAITSSNPNLKVASFLNEAGNQIYVDLDPPCKFGMKVGVKVEVVYLYFIKNTRSIVRGMVLGAISNVVVLQSKGHETEEVDAVGILSLCSFAVDPADTYCKYVAAGNQPLGNCVKMLTVHNGSGFAITSKPSPTPDQDSYGGASVCLYCRAHIAHPGSVGNLDGRCQFKGSFVQIPTTEKDPVGFCLRNKVCTVCQCWIGYGCQCDSLRQPKSSVQSVAGASDFDKNYLNRVRGSSEARLIPLASGCDPDVVKRAFDVCNKESAGMFQNLKRNCARFQELRDTEDGNLEYLDSYFVVKQTTPSNYEHEKSCYEDLKSEVTADHDFFVFNKNIYNISRQRLTKYTMMDFCYALRHFDPKDCEVLKEILVTYGCIEDYHPKWFEENKDWYDPIENSKYYVMLAKMGPIVRRALLNAIEFGNLMVEKGYVGVITLDNQDLNGKFYDFGDFQKTAPGAGVPVFDTYYSYMMPIIAMTDALAPERYFEYDVHKGYKSYDLLKYDYTEEKQELFQKYFKYWDQEYHPNCRDCSDDRCLIHCANFNILFSTLIPQTSFGNLCRKVFVDGVPFIATCGYHSKELGVIMNQDNTMSFSKMGLSQLMQFVGDPALLVGTSNNLVDLRTSCFSVCALTSGITHQTVKPGHFNKDFYDFAEKAGMFKEGSSIPLKHFFYPQTGNAAINDYDYYRYNRPTMFDICQLLFCLEVTSKYFECYEGGCIPASQVVVNNLDKSAGYPFNKFGKARLYYEMSLEEQDQLFEITKKNVLPTITQMNLKYAISAKNRARTVAGVSILSTMTNRQFHQKILKSIVNTRNASVVIGTTKFYGGWDNMLRNLIQGVEDPILMGWDYPKCDRAMPNLLRIAASLVLARKHTNCCSWSERIYRLYNECAQVLSETVLATGGIYVKPGGTSSGDATTAYANSVFNIIQATSANVARLLSVITRDIVYDNIKSLQYELYQQVYRRVNFDPAFVEKFYSYLCKNFSLMILSDDGVVCYNNTLAKQGLVADISGFREVLYYQNNVFMADSKCWVEPDLEKGPHEFCSQHTMLVEVDGEPKYLPYPDPSRILGACVFVDDVDKTEPVAVMERYIALAIDAYPLVHHENEEYKKVFFVLLAYIRKLYQELSQNMLMDYSFVMDIDKGSKFWEQEFYENMYRAPTTLQSCGVCVVCNSQTILRCGNCIRKPFLCCKCCYDHVMHTDHKNVLSINPYICSQLGCGEADVTKLYLGGMSYFCGNHKPKLSIPLVSNGTVFGIYRANCAGSENVDDFNQLATTNWSIVEPYILANRCSDSLRRFAAETVKATEELHKQQFASAEVREVFSDRELILSWEPGKTRPPLNRNYVFTGYHFTRTSKVQLGDFTFEKGEGKDVVYYKATSTAKLSVGDIFVLTSHNVVSLVAPTLCPQQTFSRFVNLRPNVMVPECFVNNIPLYHLVGKQKRTTVQGPPGSGKSHFAIGLAVYFSSARVVFTACSHAAVDALCEKAFKFLKVDDCTRIVPQRTTVDCFSKFKANDTGKKYIFSTINALPEVSCDILLVDEVSMLTNYELSFINGKINYQYVVYVGDPAQLPAPRTLLNGSLSPKDYNVVTNLMVCVKPDIFLAKCYRCPKEIVDTVSTLVYDGKFIANNPESRECFKVIVNNGNSDVGHESGSAYNTTQLEFVKDFVCRNKQWREAIFISPYNAMNQRAYRMLGLNVQTVDSSQGSEYDYVIFCVTADSQHALNINRFNVALTRAKRGILVVMRQRDELYSALKFTELDSETSLQGTGLFKICNKEFSGVHPAYAVTTKALAATYKVNDELAALVNVEAGSEITYKHLISLLGFKMSVNVEGCHNMFITRDEAIRNVRGWVGFDVEATHACGTNIGTNLPFQVGFSTGADFVVTPEGLVDTSIGNNFEPVNSKAPPGEQFNHLRVLFKSAKPWHVIRPRIVQMLADNLCNVSDCVVFVTWCHGLELTTLRYFVKIGKEQVCSCGSRATTFNSHTQAYACWKHCLGFDFVYNPLLVDIQQWGYSGNLQFNHDLHCNVHGHAHVASVDAIMTRCLAINNAFCQDVNWDLTYPHIANEDEVNSSCRYLQRMYLNACVDALKVNVVYDIGNPKGIKCVRRGDVNFRFYDKNPIVRNVKQFEYDYNQHKDKFADGLCMFWNCNVDCYPDNSLVCRYDTRNLSVFNLPGCNGGSLYVNKHAFYTPKFDRISFRNLKAMPFFFYDSSPCETIQVDGVAQDLVSLATKDCITKCNIGGAVCKKHAQMYAEFVTSYNAAVTAGFTFWVTNKLNPYNLWKSFSALQSIDNIAYNMYKGGHYDAIAGEMPTVITGDKVFVIDQGVEKAVFVNQTTLPTSVAFELYAKRNIRTLPNNRILKGLGVDVTNGFVIWDYANQTPLYRNTVKVCAYTDIEPNGLVVLYDDRYGDYQSFLAADNAVLVSTQCYKRYSYVEIPSNLLVQNGMPLKDGANLYVYKRVNGAFVTLPNTINTQGRSYETFEPRSDIERDFLAMSEESFVERYGKDLGLQHILYGEVDKPQLGGLHTVIGMYRLLRANKLNAKSVTNSDSDVMQNYFVLSDNGSYKQVCTVVDLLLDDFLELLRNILKEYGTNKSKVVTVSIDYHSINFMTWFEDGSIKTCYPQLQSAWTCGYNMPELYKVQNCVMEPCNIPNYGVGITLPSGILMNVAKYTQLCQYLSKTTICVPHNMRVMHFGAGSDKGVAPGSTVLKQWLPEGTLLVDNDIVDYVSDAHVSVLSDCNKYNTEHKFDLVISDMYTDNDSKRKHEGVIANNGNDDVFIYLSSFLRNNLALGGSFAVKVTETSWHEVLYDIAQDCAWWTMFCTAVNASSSEAFLIGVNYLGASEKVKVSGKTLHANYIFWRNCNYLQTSAYSIFDVAKFDLRLKATPVVNLKTEQKTDLVFNLIKCGKLLVRDVGNTSFTSDSFVCTM.

Over 1 to 1750 (MASSLKQGVS…VASYKTVLCK (1750 aa)) the chain is Cytoplasmic. The Ubiquitin-like 1 domain maps to 675-780 (KTVTFGETTV…SCHLIYRDYE (106 aa)). The interval 783-802 (DDIEEEDAEECDTDSGEAEE) is disordered. A Macro domain is found at 1003 to 1179 (VKPATCEKPK…YFDVTCKQKT (177 aa)). One can recognise a Ubiquitin-like 2 domain in the interval 1175-1227 (CKQKTIYLTEDGVKYRSIVLKPGDSLGQFGQVYAKNKIVFTADDVEDKEILYV). In terms of domain architecture, Peptidase C16 spans 1236–1497 (EYYGLDAQKY…SKSVKEDVSN (262 aa)). Catalysis depends on cysteine 1274, which acts as the For PL-PRO activity. Zn(2+)-binding residues include cysteine 1353, cysteine 1355, cysteine 1387, and cysteine 1390. The C4-type; degenerate zinc finger occupies 1353–1390 (CNCGIKSYELRGLEACIQPVRATNLLHFKTQYSNCPTC). Catalysis depends on for PL-PRO activity residues histidine 1437 and aspartate 1448. Residues 1751–1771 (VVLATLLIVWFVYTSNPVMFT) traverse the membrane as a helical segment. Positions 1751 to 1864 (VVLATLLIVW…KPVAGFVIIC (114 aa)) are HD1. The 65-residue stretch at 1769–1833 (MFTGIRVLDF…AYSVEQVYKD (65 aa)) folds into the 3Ecto domain. Over 1772-1843 (GIRVLDFLFE…AASGFIFNWN (72 aa)) the chain is Lumenal. Cystine bridges form between cysteine 1785–cysteine 1811 and cysteine 1802–cysteine 1808. Residues 1844-1864 (WLYLVFLILFVKPVAGFVIIC) form a helical membrane-spanning segment. The Cytoplasmic portion of the chain corresponds to 1865 to 2280 (YCVKYLVLNS…TFKCFKSYFK (416 aa)). The Y1 stretch occupies residues 1911–2001 (YIQVHHILYC…KLKRHVKPTA (91 aa)). Residues 1911-2263 (YIQVHHILYC…HTQKLLVEKK (353 aa)) form the CoV Nsp3 Y domain. Zn(2+)-binding residues include histidine 1915, cysteine 1920, cysteine 1925, cysteine 1928, cysteine 1961, histidine 1964, cysteine 1968, and cysteine 1971. Residues 1915–1928 (HHILYCKDVTCEVC) form a ZF1 region. Residues 1961–1971 (CKRHNWYCRNC) are ZF2. Residues 2002-2104 (YAYHVVDEAC…ILDQALYEQL (103 aa)) are Y2. The interval 2002–2263 (YAYHVVDEAC…HTQKLLVEKK (262 aa)) is coV-Y. The segment at 2105–2163 (VVEPVSKSVIDKVCSILSSIISVDTAALNYKAGTLRDALLSITKDEEAVDMAIFCHNHD) is Y3. Residues 2164-2263 (VDYTGDGFTN…HTQKLLVEKK (100 aa)) are Y4. A helical transmembrane segment spans residues 2281-2301 (WLLIFYILFTACCSGYYYMEV). The HD2 stretch occupies residues 2281–2664 (WLLIFYILFT…LACCYLGFII (384 aa)). The Lumenal portion of the chain corresponds to 2302-2559 (SKSFVHPMYD…FFTGVNPNIY (258 aa)). Residues 2560–2580 (MQLATMFLILVVVVLIFAMVI) traverse the membrane as a helical segment. Topologically, residues 2581-2611 (KFQGVFKAYATTVFITMLVWVINAFILCVHS) are cytoplasmic. A helical membrane pass occupies residues 2612-2632 (YNSVLAVILLVLYCYASLVTS). Residues 2633-2643 (RNTVIIMHCWL) lie on the Lumenal side of the membrane. The helical transmembrane segment at 2644-2664 (VFTFGLIVPTWLACCYLGFII) threads the bilayer. The Cytoplasmic segment spans residues 2665–3096 (YMYTPLFLWC…SSFVRKATSW (432 aa)). In terms of domain architecture, Nsp4C spans 2684–2779 (LYDGNEFVGN…RYSIGVSRLQ (96 aa)). One can recognise a Peptidase C30 domain in the interval 2780-3086 (SGFKKLVSPS…FNQIGGVRLQ (307 aa)). Catalysis depends on for 3CL-PRO activity residues histidine 2820 and cysteine 2922. The chain crosses the membrane as a helical span at residues 3097 to 3117 (FWSRCVLACFLFVLCAIVLFT). The HD3 stretch occupies residues 3097-3317 (FWSRCVLACF…WLCTCYFGLY (221 aa)). The Lumenal portion of the chain corresponds to 3118-3121 (AVPL). The chain crosses the membrane as a helical span at residues 3122 to 3142 (KFYVYAAVILLMAVLFISFTV). The Cytoplasmic segment spans residues 3143-3151 (KHVMAYMDT). A helical transmembrane segment spans residues 3152–3172 (FLLPTLITVIIGVCAEVPFIY). Residues 3173-3188 (NTLISQVVIFLSQWYD) are Lumenal-facing. The chain crosses the membrane as a helical span at residues 3189 to 3209 (PVVFDTMVPWMFLPLVLYTAF). The Cytoplasmic portion of the chain corresponds to 3210–3257 (KCVQGCYMNSFNTSLLMLYQFVKLGFVIYTSSNTLTAYTEGNWELFFE). Residues 3258–3278 (LVHTTVLANVSSNSLIGLFVF) form a helical membrane-spanning segment. Residues 3279–3296 (KCAKWMLYYCNATYLNNY) lie on the Lumenal side of the membrane. A helical membrane pass occupies residues 3297-3317 (VLMAVMVNCIGWLCTCYFGLY). The Cytoplasmic segment spans residues 3318–6629 (WWVNKVFGLT…FTSDSFVCTM (3312 aa)). Positions 3380–3462 (AKLSDVKCTT…DILKRSTVLQ (83 aa)) constitute a RdRp Nsp7 cofactor domain. Residues 3463 to 3672 (SVTQEFSHIP…GHNKVDVVLQ (210 aa)) enclose the RdRp Nsp8 cofactor domain. The 111-residue stretch at 3673–3783 (NNELMPHGVK…GAISNVVVLQ (111 aa)) folds into the Nsp9 ssRNA-binding domain. The ExoN/MTase coactivator domain occupies 3785–3926 (KGHETEEVDA…CDSLRQPKSS (142 aa)). Zn(2+) contacts are provided by cysteine 3858, cysteine 3861, histidine 3867, cysteine 3878, cysteine 3904, cysteine 3907, cysteine 3915, and cysteine 3917. 2 zinc fingers span residues 3858 to 3878 (CLYCRAHIAHPGSVGNLDGRC) and 3904 to 3917 (CTVCQCWIGYGCQC). A NiRAN domain is found at 3940 to 4198 (YLNRVRGSSE…APERYFEYDV (259 aa)). The region spanning 4203-4301 (KSYDLLKYDY…MNQDNTMSFS (99 aa)) is the Nsp12 Interface domain. Zn(2+) is bound by residues histidine 4232, cysteine 4238, cysteine 4243, cysteine 4247, and cysteine 4424. In terms of domain architecture, Nsp12 RNA-dependent RNA polymerase spans 4302-4868 (KMGLSQLMQF…NMYRAPTTLQ (567 aa)). The rdRp Fingers N-ter stretch occupies residues 4304–4517 (GLSQLMQFVG…HQKILKSIVN (214 aa)). A rdRp Palm N-ter region spans residues 4518–4556 (TRNASVVIGTTKFYGGWDNMLRNLIQGVEDPILMGWDYP). The RdRp catalytic domain occupies 4548–4710 (PILMGWDYPK…CYNNTLAKQG (163 aa)). A rdRp Fingers C-ter region spans residues 4557 to 4615 (KCDRAMPNLLRIAASLVLARKHTNCCSWSERIYRLYNECAQVLSETVLATGGIYVKPGG). Histidine 4578, cysteine 4581, and cysteine 4582 together coordinate Zn(2+). The rdRp Palm C-ter stretch occupies residues 4616-4751 (TSSGDATTAY…EKGPHEFCSQ (136 aa)). Residues serine 4695, aspartate 4696, and aspartate 4697 contribute to the active site. The segment at 4752-4868 (HTMLVEVDGE…NMYRAPTTLQ (117 aa)) is rdRp Thumb. The CV ZBD domain occupies 4869 to 4981 (SCGVCVVCNS…DDFNQLATTN (113 aa)). Residues cysteine 4873, cysteine 4876, cysteine 4884, cysteine 4887, cysteine 4894, cysteine 4897, histidine 4901, histidine 4907, cysteine 4918, cysteine 4923, cysteine 4940, and histidine 4943 each coordinate Zn(2+). One can recognise a (+)RNA virus helicase ATP-binding domain in the interval 5125-5305 (MVPECFVNNI…MVCVKPDIFL (181 aa)). Residue 5150 to 5157 (GPPGSGKS) participates in ATP binding. The region spanning 5306–5477 (AKCYRCPKEI…QGTGLFKICN (172 aa)) is the (+)RNA virus helicase C-terminal domain. Residues 5539–5753 (MFITRDEAIR…RCLAINNAFC (215 aa)) enclose the ExoN domain. Active-site residues include aspartate 5557, glutamate 5559, and glutamate 5658. 7 residues coordinate Zn(2+): cysteine 5674, cysteine 5676, cysteine 5692, histidine 5695, histidine 5723, cysteine 5727, and histidine 5730. Residues histidine 5734 and aspartate 5739 contribute to the active site. Residue cysteine 5745 coordinates Zn(2+). In terms of domain architecture, N7-MTase spans 5762–5989 (YPHIANEDEV…NLWKSFSALQ (228 aa)). S-adenosyl-L-methionine is bound at residue 5797–5803 (DIGNPKG). Residues 5877–5891 (CNGGSLYVNKHAFYT) are gpppA-binding. The Zn(2+) site is built by cysteine 5915, cysteine 5935, cysteine 5946, and histidine 5949. Positions 5990 to 6050 (SIDNIAYNMY…SVAFELYAKR (61 aa)) constitute a Nsp15 N-terminal oligomerization domain. Residues 6051–6166 (NIRTLPNNRI…VYKRVNGAFV (116 aa)) form the AV-Nsp11N/CoV-Nsp15M domain. A NendoU domain is found at 6183 to 6324 (EPRSDIERDF…EDGSIKTCYP (142 aa)). Catalysis depends on residues histidine 6212, histidine 6227, lysine 6267, lysine 6371, aspartate 6455, lysine 6499, and glutamate 6532. Positions 6327–6626 (QSAWTCGYNM…NTSFTSDSFV (300 aa)) constitute a Nidovirus-type SAM-dependent 2'-O-MTase domain.

The protein belongs to the coronaviruses polyprotein 1ab family. As to quaternary structure, interacts with host PHB and PHB2. Interacts with papain-like protease and non-structural protein 6. In terms of assembly, monomer. Homodimer. Only the homodimer shows catalytic activity. As to quaternary structure, eight copies of nsp7 and eight copies of nsp8 assemble to form a heterohexadecamer dsRNA-encircling ring structure. Eight copies of nsp7 and eight copies of nsp8 assemble to form a heterohexadecamer dsRNA-encircling ring structure. Interacts with ORF6 protein. In terms of assembly, homodimer. As to quaternary structure, homododecamer. Interacts with proofreading exoribonuclease nsp14 and 2'-O-methyltransferase nsp16; these interactions enhance nsp14 and nsp16 enzymatic activities. Interacts with host DDX1 (via C-terminus). Interacts with non-structural protein 10. In terms of assembly, homohexamer. As to quaternary structure, interacts with non-structural protein 10. Mn(2+) serves as cofactor. The cofactor is Zn(2+). In terms of processing, specific enzymatic cleavages in vivo by its own proteases yield mature proteins. 3C-like proteinase nsp5 liberates nsps 6-16 from the polyprotein. Papain-like and 3C-like proteinases are autocatalytically processed. N-glycosylated.

The protein localises to the host endoplasmic reticulum membrane. Its subcellular location is the host cytoplasm. It localises to the host perinuclear region. It is found in the host endoplasmic reticulum. The protein resides in the host endoplasmic reticulum-Golgi intermediate compartment. The catalysed reaction is Thiol-dependent hydrolysis of ester, thioester, amide, peptide and isopeptide bonds formed by the C-terminal Gly of ubiquitin (a 76-residue protein attached to proteins as an intracellular targeting signal).. It catalyses the reaction RNA(n) + a ribonucleoside 5'-triphosphate = RNA(n+1) + diphosphate. The enzyme catalyses ATP + H2O = ADP + phosphate + H(+). It carries out the reaction uridylyl-uridylyl-ribonucleotide-RNA = a 3'-end uridylyl-2',3'-cyclophospho-uridine-RNA + a 5'-end dephospho-ribonucleoside-RNA. The catalysed reaction is a 5'-end diphospho-ribonucleoside in mRNA + GTP + H(+) = a 5'-end (5'-triphosphoguanosine)-ribonucleoside in mRNA + diphosphate. It catalyses the reaction a 5'-end (N(7)-methyl 5'-triphosphoguanosine)-ribonucleoside in mRNA + S-adenosyl-L-methionine = a 5'-end (N(7)-methyl 5'-triphosphoguanosine)-(2'-O-methyl-ribonucleoside) in mRNA + S-adenosyl-L-homocysteine + H(+). Multifunctional protein involved in the transcription and replication of viral RNAs. Contains the proteinases responsible for the cleavages of the polyprotein. Its function is as follows. May play a role in the modulation of host cell survival signaling pathway by interacting with host PHB and PHB2. Indeed, these two proteins play a role in maintaining the functional integrity of the mitochondria and protecting cells from various stresses. In terms of biological role, responsible for the cleavages located at the N-terminus of the replicase polyprotein. In addition, PL-PRO possesses a deubiquitinating/deISGylating activity and processes both 'Lys-48'- and 'Lys-63'-linked polyubiquitin chains from cellular substrates. Functionally, plays a role in host membrane rearrangement that leads to creation of cytoplasmic double-membrane vesicles (DMV) necessary for viral replication. Alone is able to induce paired membranes. Coexpression of nsp3 and nsp4 does not result in the formation of DMVs. Responsible for the majority of cleavages as it cleaves the C-terminus of replicase polyprotein at 11 sites. Recognizes substrates containing the core sequence [ILMVF]-Q-|-[SGACN]. Inhibited by the substrate-analog Cbz-Val-Asn-Ser-Thr-Leu-Gln-CMK. Its function is as follows. Forms a hexadecamer with nsp8 (8 subunits of each) that may participate in viral replication by acting as a primase. Alternatively, may synthesize substantially longer products than oligonucleotide primers. In terms of biological role, forms a hexadecamer with nsp7 (8 subunits of each) that may participate in viral replication by acting as a primase. Alternatively, may synthesize substantially longer products than oligonucleotide primers. Functionally, forms a primer, NSP9-pU, which is utilized by the polymerase for the initiation of RNA chains. Interacts with ribosome signal recognition particle RNA (SRP). Together with NSP8, suppress protein integration into the cell membrane, thereby disrupting host immune defenses. Plays a pivotal role in viral transcription by stimulating both nsp14 3'-5' exoribonuclease and nsp16 2'-O-methyltransferase activities. Therefore plays an essential role in viral mRNAs cap methylation. Its function is as follows. RNA-directed RNA polymerase that catalyzes the transcription of viral genomic and subgenomic RNAs. Acts in complex with nsp7 and nsp8 to transcribe both the minus and positive strands of genomic RNA. The kinase-like NiRAN domain of NSP12 attaches one or more nucleotides to the amino terminus of NSP9, forming a covalent RNA-protein intermediate that serves as transcription/replication primer. Subgenomic RNAs (sgRNAs) are formed by discontinuous transcription: The polymerase has the ability to pause at transcription-regulating sequences (TRS) and jump to the leader TRS, resulting in a major deletion. This creates a series of subgenomic RNAs that are replicated, transcribed and translated. In addition, Nsp12 is a subunit of the viral RNA capping enzyme that catalyzes the RNA guanylyltransferase reaction for genomic and sub-genomic RNAs. Subsequently, the NiRAN domain transfers RNA to GDP, and forms the core cap structure GpppA-RNA. In terms of biological role, multi-functional protein with a zinc-binding domain in N-terminus displaying RNA and DNA duplex-unwinding activities with 5' to 3' polarity. Activity of helicase is dependent on magnesium. Functionally, enzyme possessing two different activities: an exoribonuclease activity acting on both ssRNA and dsRNA in a 3' to 5' direction and a N7-guanine methyltransferase activity. Acts as a proofreading exoribonuclease for RNA replication, thereby lowering The sensitivity of the virus to RNA mutagens. Plays a role in viral transcription/replication and prevents the simultaneous activation of host cell dsRNA sensors, such as MDA5/IFIH1, OAS, and PKR. Acts by degrading the 5'-polyuridines generated during replication of the poly(A) region of viral genomic and subgenomic RNAs. Catalyzes a two-step reaction in which a 2'3'-cyclic phosphate (2'3'-cP) is first generated by 2'-O transesterification, which is then hydrolyzed to a 3'-phosphate (3'-P). If not degraded, poly(U) RNA would hybridize with poly(A) RNA tails and activate host dsRNA sensors. Its function is as follows. Methyltransferase that mediates mRNA cap 2'-O-ribose methylation to the 5'-cap structure of viral mRNAs. N7-methyl guanosine cap is a prerequisite for binding of nsp16. Therefore plays an essential role in viral mRNAs cap methylation which is essential to evade immune system. The polypeptide is Replicase polyprotein 1ab (rep) (Gallus gallus (Chicken)).